The sequence spans 512 residues: 2,3-bisphosphoglycerate-independent phosphoglycerate mutase (512 aa).

Residues D11 and S61 each contribute to the Mn(2+) site. S61 acts as the Phosphoserine intermediate in catalysis. Residues H122, 152–153 (RD), R184, R190, 259–262 (RADR), and K332 each bind substrate. 5 residues coordinate Mn(2+): D399, H403, D440, H441, and H459.

This sequence belongs to the BPG-independent phosphoglycerate mutase family. As to quaternary structure, monomer. The cofactor is Mn(2+).

It catalyses the reaction (2R)-2-phosphoglycerate = (2R)-3-phosphoglycerate. It functions in the pathway carbohydrate degradation; glycolysis; pyruvate from D-glyceraldehyde 3-phosphate: step 3/5. Its function is as follows. Catalyzes the interconversion of 2-phosphoglycerate and 3-phosphoglycerate. In Francisella tularensis subsp. novicida (strain U112), this protein is 2,3-bisphosphoglycerate-independent phosphoglycerate mutase.